A 91-amino-acid polypeptide reads, in one-letter code: Putative pterin-4-alpha-carbinolamine dehydratase (91 aa).

This sequence belongs to the pterin-4-alpha-carbinolamine dehydratase family.

It carries out the reaction (4aS,6R)-4a-hydroxy-L-erythro-5,6,7,8-tetrahydrobiopterin = (6R)-L-erythro-6,7-dihydrobiopterin + H2O. The protein is Putative pterin-4-alpha-carbinolamine dehydratase of Sulfolobus acidocaldarius (strain ATCC 33909 / DSM 639 / JCM 8929 / NBRC 15157 / NCIMB 11770).